The chain runs to 566 residues: SRSF protein kinase 3 (566 aa).

Positions 1–13 are enriched in gly residues; sequence MSASTGGGGGGDS. Residues 1–60 are disordered; it reads MSASTGGGGGGDSGSSSSSSSQASCGPEPSGSELAPPTPAPRMLQGLLGSDDEEQEDPKD. Residues 14–26 are compositionally biased toward low complexity; the sequence is GSSSSSSSQASCG. S50 carries the post-translational modification Phosphoserine. The Protein kinase domain occupies 79-564; the sequence is YHVVRKLGWG…AADCLQHPWL (486 aa). ATP is bound by residues 85-93 and K108; that span reads LGWGHFSTV. D212 functions as the Proton acceptor in the catalytic mechanism. The segment covering 236 to 254 has biased composition (polar residues); that stretch reads EWQQSGAPPPSRSTVSTAP. 2 disordered regions span residues 236–283 and 295–353; these read EWQQ…LLEE and EAAA…SGFS. Over residues 263–278 the composition is skewed to basic residues; the sequence is SKNKRKKMRRKRKQQK. S329 is subject to Phosphoserine. A compositionally biased stretch (low complexity) spans 330-339; that stretch reads PASSSPAPGG. Polar residues predominate over residues 344–353; sequence SPGSQTSGFS.

The protein belongs to the protein kinase superfamily. In terms of tissue distribution, highly expressed in skeletal muscle, heart, uterus and parorchis. Weakly expressed in brain, stomach, small intestine and ovary.

The protein localises to the nucleus. It is found in the cytoplasm. The catalysed reaction is L-seryl-[protein] + ATP = O-phospho-L-seryl-[protein] + ADP + H(+). It carries out the reaction L-threonyl-[protein] + ATP = O-phospho-L-threonyl-[protein] + ADP + H(+). Serine/arginine-rich protein-specific kinase which specifically phosphorylates its substrates at serine residues located in regions rich in arginine/serine dipeptides, known as RS domains. Phosphorylates the SR splicing factor SRSF1 and the lamin-B receptor (LBR) in vitro. Required for normal muscle development. The chain is SRSF protein kinase 3 (SRPK3) from Sus scrofa (Pig).